Consider the following 306-residue polypeptide: Ornithine carbamoyltransferase (306 aa).

Carbamoyl phosphate-binding positions include 53–56 (STRT), Gln-80, Arg-104, and 131–134 (HPCQ). L-ornithine is bound by residues Asn-162, Asp-219, and 223 to 224 (SM). Residues 259 to 260 (CL) and Arg-287 each bind carbamoyl phosphate.

Belongs to the aspartate/ornithine carbamoyltransferase superfamily. OTCase family.

Its subcellular location is the cytoplasm. The catalysed reaction is carbamoyl phosphate + L-ornithine = L-citrulline + phosphate + H(+). It participates in amino-acid biosynthesis; L-arginine biosynthesis; L-arginine from L-ornithine and carbamoyl phosphate: step 1/3. Reversibly catalyzes the transfer of the carbamoyl group from carbamoyl phosphate (CP) to the N(epsilon) atom of ornithine (ORN) to produce L-citrulline. The chain is Ornithine carbamoyltransferase from Acinetobacter baylyi (strain ATCC 33305 / BD413 / ADP1).